Reading from the N-terminus, the 211-residue chain is Small ribosomal subunit protein eS1 (211 aa).

Belongs to the eukaryotic ribosomal protein eS1 family.

The chain is Small ribosomal subunit protein eS1 from Archaeoglobus fulgidus (strain ATCC 49558 / DSM 4304 / JCM 9628 / NBRC 100126 / VC-16).